Here is a 339-residue protein sequence, read N- to C-terminus: Phenylalanine--tRNA ligase alpha subunit (339 aa).

Glu-254 contributes to the Mg(2+) binding site.

It belongs to the class-II aminoacyl-tRNA synthetase family. Phe-tRNA synthetase alpha subunit type 1 subfamily. In terms of assembly, tetramer of two alpha and two beta subunits. The cofactor is Mg(2+).

The protein localises to the cytoplasm. It catalyses the reaction tRNA(Phe) + L-phenylalanine + ATP = L-phenylalanyl-tRNA(Phe) + AMP + diphosphate + H(+). The chain is Phenylalanine--tRNA ligase alpha subunit from Dictyoglomus thermophilum (strain ATCC 35947 / DSM 3960 / H-6-12).